Here is a 106-residue protein sequence, read N- to C-terminus: Nucleoid-associated protein Rpal_0620 (106 aa).

It belongs to the YbaB/EbfC family. As to quaternary structure, homodimer.

The protein resides in the cytoplasm. It localises to the nucleoid. In terms of biological role, binds to DNA and alters its conformation. May be involved in regulation of gene expression, nucleoid organization and DNA protection. The protein is Nucleoid-associated protein Rpal_0620 of Rhodopseudomonas palustris (strain TIE-1).